The following is a 35-amino-acid chain: Conotoxin Cal6.1f (35 aa).

Positions 1-8 (GLIRPSKR) are excised as a propeptide. Cystine bridges form between Cys9/Cys25, Cys16/Cys29, and Cys24/Cys34.

Belongs to the conotoxin O1 superfamily. Expressed by the venom duct.

It localises to the secreted. Functionally, probable neurotoxin with unknown target. Possibly targets ion channels. This chain is Conotoxin Cal6.1f, found in Californiconus californicus (California cone).